The following is a 941-amino-acid chain: Cilia- and flagella-associated protein 69 (941 aa).

The protein localises to the cell projection. The protein resides in the cilium. It localises to the flagellum. Cilium- and flagellum-associated protein. In the olfactory epithelium, regulates the speed of activation and termination of the odor response and thus contributes to the robustness of olfactory transduction pathways. Required for sperm flagellum assembly and stability. The sequence is that of Cilia- and flagella-associated protein 69 from Callithrix jacchus (White-tufted-ear marmoset).